The chain runs to 203 residues: Secreted phosphoprotein 24 (203 aa).

A signal peptide spans 1-23 (MEQAMLKTLALLVLGMHYWCATG). Disulfide bonds link C86/C96 and C109/C127. S90 carries the phosphoserine modification. Phosphoserine is present on residues S137, S138, S162, S165, and S174.

The protein belongs to the SPP2 family. Post-translationally, phosphorylation sites are present in the extracellular medium.

The protein resides in the secreted. Could coordinate an aspect of bone turnover. In Mus musculus (Mouse), this protein is Secreted phosphoprotein 24 (Spp2).